The chain runs to 152 residues: VQ motif-containing protein 8, chloroplastic (152 aa).

The interval 1–42 (MIPTRCNEINGSRPSSLKLAGESHTIKKTSSCKSKPRPHGRA) is disordered. Residues 1–58 (MIPTRCNEINGSRPSSLKLAGESHTIKKTSSCKSKPRPHGRASPVIIYAHSPKVIHTR) constitute a chloroplast transit peptide. Positions 62 to 71 (FMALVQRLTG) match the VQ motif. Positions 80-108 (TSESSSSVVTEEVNVGDDNTAAPFSQDRT) are disordered. The segment covering 81 to 92 (SESSSSVVTEEV) has biased composition (low complexity).

The protein localises to the plastid. Its subcellular location is the chloroplast. May be involved in chloroplast development. The chain is VQ motif-containing protein 8, chloroplastic from Arabidopsis thaliana (Mouse-ear cress).